We begin with the raw amino-acid sequence, 208 residues long: Sodium/potassium-transporting ATPase subunit beta-1-interacting protein 4 (208 aa).

Transmembrane regions (helical) follow at residues 10-30 (LILL…FDFL), 35-55 (APIL…FGTL), 62-82 (VIAY…LICF), and 151-171 (ALQI…TSVF).

This sequence belongs to the NKAIN family. As to quaternary structure, interacts with atp1b1 C-terminus.

It is found in the cell membrane. The chain is Sodium/potassium-transporting ATPase subunit beta-1-interacting protein 4 (nkain4) from Xenopus tropicalis (Western clawed frog).